Reading from the N-terminus, the 213-residue chain is Achelase-1 (213 aa).

One can recognise a Peptidase S1 domain in the interval 1 to 213 (IVGGSVTTIG…RYTSWIQSNA (213 aa)). Residues Cys26 and Cys42 are joined by a disulfide bond. Active-site charge relay system residues include His41 and Asp86. Cys155 and Cys172 form a disulfide bridge. Catalysis depends on Ser188, which acts as the Charge relay system.

This sequence belongs to the peptidase S1 family. In terms of tissue distribution, hemolymph and saliva of the larval form (caterpillar).

It is found in the secreted. The protein resides in the extracellular space. Sensitive to serine proteinase inhibitors and thiol proteinase inhibitors. Its function is as follows. Fibrinolytic activity; shows preferential cleavage of Arg-Gly bonds in all three fibrinogen chains. Contact with the caterpillars causes severe bleeding, due the anticoagulant effect of the protein. In Lonomia achelous (Giant silkworm moth), this protein is Achelase-1.